The chain runs to 357 residues: MAWEHLRVTDTPTWPSILGRLTTGQNLGTGQAAWAMDQIMTGTATPAQIAGFAVAMKLKRPTSAEVTELADVMLKHARRIPTDVIGNETVDIVGTGGDGANTVNLSTMAAIVVAAAGVPVMKHGNRAASSLSGGADTLEALGVRIDLGPEQVAASVAEVGIGFAFANQFHPSYKHASAVRRELGVPTVFNLLGPLTNPARPRAGLIGCAWAELAEVMAGVFASRNSSVLVVHGDDGLDELTTTTTSTIWRVQAGTVERLTFDPAAFGFQRAHLSELVGGDAEYNAAEVRAVLGGAKGAVRDAVVLNAAGALVAHAGLSSDAKWVPAWEAGLARATETIDSGAAEKLLARWVRFTQKL.

5-phospho-alpha-D-ribose 1-diphosphate contacts are provided by residues Gly94, 97–98 (GD), Thr102, 104–107 (NLST), 122–130 (KHGNRAASS), and Gly134. Gly94 is an anthranilate binding site. Residue Ser106 participates in Mg(2+) binding. Asn125 contributes to the anthranilate binding site. Arg180 contacts anthranilate. 2 residues coordinate Mg(2+): Asp238 and Glu239.

It belongs to the anthranilate phosphoribosyltransferase family. In terms of assembly, homodimer. Mg(2+) serves as cofactor.

It catalyses the reaction N-(5-phospho-beta-D-ribosyl)anthranilate + diphosphate = 5-phospho-alpha-D-ribose 1-diphosphate + anthranilate. It participates in amino-acid biosynthesis; L-tryptophan biosynthesis; L-tryptophan from chorismate: step 2/5. Its function is as follows. Catalyzes the transfer of the phosphoribosyl group of 5-phosphorylribose-1-pyrophosphate (PRPP) to anthranilate to yield N-(5'-phosphoribosyl)-anthranilate (PRA). The sequence is that of Anthranilate phosphoribosyltransferase from Mycobacterium sp. (strain JLS).